Here is a 235-residue protein sequence, read N- to C-terminus: Protein LIFEGUARD 1 (235 aa).

Helical transmembrane passes span 33–53 (YSILSLQLLVTVGVSAVVYFV), 67–87 (LAVFFVILLLPLLLLWPLLAF), 95–115 (CIVLSIFTLSISFSVGICCSL), 120–140 (IVLEAAILTAVMVFGLTIYTF), 149–169 (FSFLGPFLFGALLIILVFTLL), 178–198 (LSSMIFSGIASIVFCGYIIFD), and 212–232 (ITAAIRLYLDVMNLFLSLLGI).

The protein belongs to the BI1 family. In terms of tissue distribution, expressed at very low in leaves.

The protein localises to the membrane. In terms of biological role, (Microbial infection) Facilitates the development of the powdery mildew fungus E.cruciferarum. (Microbial infection) May prevent cell death upon A.alternata f.sp. lycopersici (AAL) toxin treatment. This Arabidopsis thaliana (Mouse-ear cress) protein is Protein LIFEGUARD 1.